A 387-amino-acid chain; its full sequence is Formate-dependent phosphoribosylglycinamide formyltransferase (387 aa).

Residues 15 to 16 (EL) and Glu-75 contribute to the N(1)-(5-phospho-beta-D-ribosyl)glycinamide site. ATP contacts are provided by residues Arg-106, Lys-147, 152 to 157 (SSGKGQ), 187 to 190 (EEFI), and Glu-195. An ATP-grasp domain is found at 111 to 301 (DLASNELNIR…EFELHLRAVL (191 aa)). Mg(2+) is bound by residues Glu-260 and Glu-272. Residues Asp-279, Lys-349, and 356–357 (RR) each bind N(1)-(5-phospho-beta-D-ribosyl)glycinamide.

Belongs to the PurK/PurT family. Homodimer.

The enzyme catalyses N(1)-(5-phospho-beta-D-ribosyl)glycinamide + formate + ATP = N(2)-formyl-N(1)-(5-phospho-beta-D-ribosyl)glycinamide + ADP + phosphate + H(+). It participates in purine metabolism; IMP biosynthesis via de novo pathway; N(2)-formyl-N(1)-(5-phospho-D-ribosyl)glycinamide from N(1)-(5-phospho-D-ribosyl)glycinamide (formate route): step 1/1. In terms of biological role, involved in the de novo purine biosynthesis. Catalyzes the transfer of formate to 5-phospho-ribosyl-glycinamide (GAR), producing 5-phospho-ribosyl-N-formylglycinamide (FGAR). Formate is provided by PurU via hydrolysis of 10-formyl-tetrahydrofolate. In Prochlorococcus marinus (strain NATL1A), this protein is Formate-dependent phosphoribosylglycinamide formyltransferase.